Consider the following 569-residue polypeptide: Adenine deaminase (569 aa).

The protein belongs to the metallo-dependent hydrolases superfamily. Adenine deaminase family. Requires Mn(2+) as cofactor.

It carries out the reaction adenine + H2O + H(+) = hypoxanthine + NH4(+). The polypeptide is Adenine deaminase (Desulfatibacillum aliphaticivorans).